Reading from the N-terminus, the 203-residue chain is uncharacterized protein (203 aa).

A signal peptide spans 1–31 (MKKTFVKKAMLTTAAMTSAALLTFGPDAASA).

This is an uncharacterized protein from Bacillus subtilis (strain 168).